Reading from the N-terminus, the 278-residue chain is MRFGIVARRDREAALKLAYRVYDFLKVSGYDVLVDRETFENLPEFEEGDVVPLEEFDVDFIIAIGGDGTILRIEHKTKKDFPILGINMGTLGFLTEVEPHETFFALSRLLEGDYWIDERMKLRTYLNGENSVPDALNEDAILTGVPGKIVHLKYYVDGGLADEVRSDGVIVSTPTGSTGYALSAGGPFVDPRLELFVIAPINPIALSSRPMVVPSSSEIEIVPLPPERGLILTVDGQFYTHLSPDTEIKIKKSPRKARFVRFSHEIYPRYPFRLKKRF.

Asp67 functions as the Proton acceptor in the catalytic mechanism. NAD(+) is bound by residues 67-68 (DG), Arg72, 137-138 (NE), Lys148, Arg165, Asp167, 178-183 (TGYALS), and Gln237.

The protein belongs to the NAD kinase family. The cofactor is a divalent metal cation.

It localises to the cytoplasm. It catalyses the reaction NAD(+) + ATP = ADP + NADP(+) + H(+). Involved in the regulation of the intracellular balance of NAD and NADP, and is a key enzyme in the biosynthesis of NADP. Catalyzes specifically the phosphorylation on 2'-hydroxyl of the adenosine moiety of NAD to yield NADP. The protein is NAD kinase of Thermococcus gammatolerans (strain DSM 15229 / JCM 11827 / EJ3).